The sequence spans 250 residues: NADH-quinone oxidoreductase subunit C (250 aa).

It belongs to the complex I 30 kDa subunit family. In terms of assembly, NDH-1 is composed of 14 different subunits. Subunits NuoB, C, D, E, F, and G constitute the peripheral sector of the complex.

The protein localises to the cell inner membrane. It catalyses the reaction a quinone + NADH + 5 H(+)(in) = a quinol + NAD(+) + 4 H(+)(out). Its function is as follows. NDH-1 shuttles electrons from NADH, via FMN and iron-sulfur (Fe-S) centers, to quinones in the respiratory chain. The immediate electron acceptor for the enzyme in this species is believed to be ubiquinone. Couples the redox reaction to proton translocation (for every two electrons transferred, four hydrogen ions are translocated across the cytoplasmic membrane), and thus conserves the redox energy in a proton gradient. The chain is NADH-quinone oxidoreductase subunit C from Xylella fastidiosa (strain M23).